Reading from the N-terminus, the 368-residue chain is Zinc finger protein 24 (368 aa).

Residue Lys22 forms a Glycyl lysine isopeptide (Lys-Gly) (interchain with G-Cter in SUMO2) linkage. Lys27 is covalently cross-linked (Glycyl lysine isopeptide (Lys-Gly) (interchain with G-Cter in SUMO1); alternate). A Glycyl lysine isopeptide (Lys-Gly) (interchain with G-Cter in SUMO2); alternate cross-link involves residue Lys27. One can recognise an SCAN box domain in the interval Arg52–Leu134. A phosphoserine mark is found at Ser132 and Ser142. Residues Lys147, Lys177, and Lys236 each participate in a glycyl lysine isopeptide (Lys-Gly) (interchain with G-Cter in SUMO2) cross-link. The segment at His251 to His273 adopts a C2H2-type 1 zinc-finger fold. A necessary and sufficient for nuclear localization region spans residues His251–His301. Ser274 carries the post-translational modification Phosphoserine. Residues Lys277 and Lys286 each participate in a glycyl lysine isopeptide (Lys-Gly) (interchain with G-Cter in SUMO2) cross-link. C2H2-type zinc fingers lie at residues Tyr279–His301, Tyr307–His329, and Tyr335–His357. Ser292 bears the Phosphoserine mark. Phosphotyrosine is present on Tyr335. Residues Lys361 and Lys367 each participate in a glycyl lysine isopeptide (Lys-Gly) (interchain with G-Cter in SUMO2) cross-link.

The protein belongs to the krueppel C2H2-type zinc-finger protein family. In terms of processing, sumoylated.

The protein resides in the nucleus. Transcription factor required for myelination of differentiated oligodendrocytes. Required for the conversion of oligodendrocytes from the premyelinating to the myelinating state. In the developing central nervous system (CNS), involved in the maintenance in the progenitor stage by promoting the cell cycle. Specifically binds to the 5'-TCAT-3' DNA sequence. Has transcription repressor activity in vitro. This is Zinc finger protein 24 (Znf24) from Rattus norvegicus (Rat).